Consider the following 396-residue polypeptide: Putative pyridoxal phosphate-dependent acyltransferase (396 aa).

111 to 112 is a pyridoxal 5'-phosphate binding site; that stretch reads GF. Position 136 (histidine 136) interacts with substrate. Pyridoxal 5'-phosphate is bound by residues serine 186, 211–214, and 241–244; these read DDAH and TLSK. At lysine 244 the chain carries N6-(pyridoxal phosphate)lysine. A substrate-binding site is contributed by threonine 358.

It belongs to the class-II pyridoxal-phosphate-dependent aminotransferase family. Homodimer. Pyridoxal 5'-phosphate is required as a cofactor.

In Bacillus anthracis, this protein is Putative pyridoxal phosphate-dependent acyltransferase.